A 457-amino-acid polypeptide reads, in one-letter code: TnpB-like protein ORF457 (457 aa).

Residues Met1–Ile22 are disordered.

It in the N-terminal section; belongs to the transposase 2 family. This sequence in the C-terminal section; belongs to the transposase 35 family.

The protein is TnpB-like protein ORF457 of Acidianus two-tailed virus (ATV).